A 321-amino-acid chain; its full sequence is Lipoyl synthase (321 aa).

Positions 68, 73, 79, 94, 98, 101, and 308 each coordinate [4Fe-4S] cluster. Residues 80–297 (FNHGTATFMI…KELAESIGFT (218 aa)) form the Radical SAM core domain.

This sequence belongs to the radical SAM superfamily. Lipoyl synthase family. Requires [4Fe-4S] cluster as cofactor.

Its subcellular location is the cytoplasm. It catalyses the reaction [[Fe-S] cluster scaffold protein carrying a second [4Fe-4S](2+) cluster] + N(6)-octanoyl-L-lysyl-[protein] + 2 oxidized [2Fe-2S]-[ferredoxin] + 2 S-adenosyl-L-methionine + 4 H(+) = [[Fe-S] cluster scaffold protein] + N(6)-[(R)-dihydrolipoyl]-L-lysyl-[protein] + 4 Fe(3+) + 2 hydrogen sulfide + 2 5'-deoxyadenosine + 2 L-methionine + 2 reduced [2Fe-2S]-[ferredoxin]. The protein operates within protein modification; protein lipoylation via endogenous pathway; protein N(6)-(lipoyl)lysine from octanoyl-[acyl-carrier-protein]: step 2/2. Its function is as follows. Catalyzes the radical-mediated insertion of two sulfur atoms into the C-6 and C-8 positions of the octanoyl moiety bound to the lipoyl domains of lipoate-dependent enzymes, thereby converting the octanoylated domains into lipoylated derivatives. In Shewanella halifaxensis (strain HAW-EB4), this protein is Lipoyl synthase.